The sequence spans 318 residues: Acetyl-coenzyme A carboxylase carboxyl transferase subunit alpha (318 aa).

Residues 38 to 292 (KLEKRLAKLE…NKTITKSLHA (255 aa)) enclose the CoA carboxyltransferase C-terminal domain.

It belongs to the AccA family. In terms of assembly, acetyl-CoA carboxylase is a heterohexamer composed of biotin carboxyl carrier protein (AccB), biotin carboxylase (AccC) and two subunits each of ACCase subunit alpha (AccA) and ACCase subunit beta (AccD).

It localises to the cytoplasm. It catalyses the reaction N(6)-carboxybiotinyl-L-lysyl-[protein] + acetyl-CoA = N(6)-biotinyl-L-lysyl-[protein] + malonyl-CoA. It functions in the pathway lipid metabolism; malonyl-CoA biosynthesis; malonyl-CoA from acetyl-CoA: step 1/1. Component of the acetyl coenzyme A carboxylase (ACC) complex. First, biotin carboxylase catalyzes the carboxylation of biotin on its carrier protein (BCCP) and then the CO(2) group is transferred by the carboxyltransferase to acetyl-CoA to form malonyl-CoA. This chain is Acetyl-coenzyme A carboxylase carboxyl transferase subunit alpha, found in Listeria welshimeri serovar 6b (strain ATCC 35897 / DSM 20650 / CCUG 15529 / CIP 8149 / NCTC 11857 / SLCC 5334 / V8).